A 580-amino-acid chain; its full sequence is Xylulose kinase (580 aa).

Substrate-binding residues include histidine 99, arginine 170, aspartate 280, and asparagine 281. ATP is bound by residues tryptophan 355, 441–442, and asparagine 445; that span reads GA.

It belongs to the FGGY kinase family. As to quaternary structure, monomer.

The enzyme catalyses D-xylulose + ATP = D-xylulose 5-phosphate + ADP + H(+). Its function is as follows. Phosphorylates D-xylulose to produce D-xylulose 5-phosphate, a molecule that may play an important role in the regulation of glucose metabolism and lipogenesis. The polypeptide is Xylulose kinase (XYLB) (Pongo abelii (Sumatran orangutan)).